The following is a 90-amino-acid chain: Small ribosomal subunit protein bS20 (90 aa).

A compositionally biased stretch (basic and acidic residues) spans 1-11 (MANIKSSEKDI). The disordered stretch occupies residues 1-29 (MANIKSSEKDIRRTKRRNAANSQNRSRLR).

Belongs to the bacterial ribosomal protein bS20 family.

Its function is as follows. Binds directly to 16S ribosomal RNA. In Leptospira borgpetersenii serovar Hardjo-bovis (strain JB197), this protein is Small ribosomal subunit protein bS20.